Here is a 62-residue protein sequence, read N- to C-terminus: Photosystem II reaction center protein Z (62 aa).

2 helical membrane passes run 8–28 (AVFALIATSSILLISVPVVFA) and 41–61 (FSGTSLWLGLVFLVGILNSLI).

This sequence belongs to the PsbZ family. As to quaternary structure, PSII is composed of 1 copy each of membrane proteins PsbA, PsbB, PsbC, PsbD, PsbE, PsbF, PsbH, PsbI, PsbJ, PsbK, PsbL, PsbM, PsbT, PsbY, PsbZ, Psb30/Ycf12, at least 3 peripheral proteins of the oxygen-evolving complex and a large number of cofactors. It forms dimeric complexes.

The protein localises to the plastid. It localises to the chloroplast thylakoid membrane. Functionally, may control the interaction of photosystem II (PSII) cores with the light-harvesting antenna, regulates electron flow through the 2 photosystem reaction centers. PSII is a light-driven water plastoquinone oxidoreductase, using light energy to abstract electrons from H(2)O, generating a proton gradient subsequently used for ATP formation. The protein is Photosystem II reaction center protein Z of Spinacia oleracea (Spinach).